Here is a 200-residue protein sequence, read N- to C-terminus: Recombination protein RecR (200 aa).

The C4-type zinc finger occupies 59–74 (CEICGNIDTRSPCTVC). Residues 82–177 (SIIVVVADVA…KVTRLAHGVP (96 aa)) enclose the Toprim domain.

Belongs to the RecR family.

Functionally, may play a role in DNA repair. It seems to be involved in an RecBC-independent recombinational process of DNA repair. It may act with RecF and RecO. In Nitrobacter hamburgensis (strain DSM 10229 / NCIMB 13809 / X14), this protein is Recombination protein RecR.